A 262-amino-acid polypeptide reads, in one-letter code: Small ribosomal subunit protein uS2 (262 aa).

Positions 224–262 are disordered; that stretch reads GKQGQDDAQQETADDNAANETVSEDSLKNLKNSVEGKED.

The protein belongs to the universal ribosomal protein uS2 family.

The chain is Small ribosomal subunit protein uS2 from Limosilactobacillus reuteri (strain DSM 20016) (Lactobacillus reuteri).